Consider the following 226-residue polypeptide: Orotate phosphoribosyltransferase (226 aa).

Residues Arg107, Lys108, Lys111, and 133-141 (EDLTTDGGS) each bind 5-phospho-alpha-D-ribose 1-diphosphate. Thr137 is an orotate binding site.

This sequence belongs to the purine/pyrimidine phosphoribosyltransferase family. PyrE subfamily. In terms of assembly, homodimer. It depends on Mg(2+) as a cofactor.

The enzyme catalyses orotidine 5'-phosphate + diphosphate = orotate + 5-phospho-alpha-D-ribose 1-diphosphate. It functions in the pathway pyrimidine metabolism; UMP biosynthesis via de novo pathway; UMP from orotate: step 1/2. Its function is as follows. Catalyzes the transfer of a ribosyl phosphate group from 5-phosphoribose 1-diphosphate to orotate, leading to the formation of orotidine monophosphate (OMP). The protein is Orotate phosphoribosyltransferase of Dinoroseobacter shibae (strain DSM 16493 / NCIMB 14021 / DFL 12).